The chain runs to 628 residues: Putative ankyrin repeat protein L769 (628 aa).

4 ANK repeats span residues 217-246, 333-362, 421-451, and 512-542; these read NYMD…EYDF, DLDE…DINR, TAEN…NHDL, and NNLK…DQDY.

This chain is Putative ankyrin repeat protein L769, found in Acanthamoeba polyphaga mimivirus (APMV).